Here is a 181-residue protein sequence, read N- to C-terminus: Trafficking protein particle complex subunit 3 homolog (181 aa).

Cysteine 70 carries S-palmitoyl cysteine lipidation.

Belongs to the TRAPP small subunits family. BET3 subfamily. As to quaternary structure, homodimer. Part of the multisubunit TRAPP (transport protein particle) complex.

It is found in the golgi apparatus. The protein resides in the cis-Golgi network. The protein localises to the endoplasmic reticulum. May play a role in vesicular transport from endoplasmic reticulum to Golgi. Required for the systemic spread of the RNAi response. The sequence is that of Trafficking protein particle complex subunit 3 homolog (trpp-3) from Caenorhabditis elegans.